Here is a 196-residue protein sequence, read N- to C-terminus: Baseplate wedge protein gp53 (196 aa).

As to quaternary structure, part of the baseplate macromolecular complex which consists of gp5, gp5.4, gp27 (central spike complex); gp6, gp25, gp53 (inner baseplate); gp7, gp8 (intermediate baseplate); gp9, gp10, gp11, gp12 (peripheral); gp48 and gp54 (proximal region of the tail tube). Interacts with gp25 and with the (gp6)2-gp7 heterotrimeric molecule.

Its subcellular location is the virion. Functionally, baseplate protein that is located next to the tail tube (inner baseplate). Involved in the tail assembly. Involved in the tail assembly. This Enterobacteria phage T4 (Bacteriophage T4) protein is Baseplate wedge protein gp53 (53).